The primary structure comprises 227 residues: Phosphoribosylformylglycinamidine synthase subunit PurQ (227 aa).

Positions Phe-3–Val-225 constitute a Glutamine amidotransferase type-1 domain. Cys-86 functions as the Nucleophile in the catalytic mechanism. Residues His-194 and Glu-196 contribute to the active site.

In terms of assembly, part of the FGAM synthase complex composed of 1 PurL, 1 PurQ and 2 PurS subunits.

The protein localises to the cytoplasm. The enzyme catalyses N(2)-formyl-N(1)-(5-phospho-beta-D-ribosyl)glycinamide + L-glutamine + ATP + H2O = 2-formamido-N(1)-(5-O-phospho-beta-D-ribosyl)acetamidine + L-glutamate + ADP + phosphate + H(+). It catalyses the reaction L-glutamine + H2O = L-glutamate + NH4(+). The protein operates within purine metabolism; IMP biosynthesis via de novo pathway; 5-amino-1-(5-phospho-D-ribosyl)imidazole from N(2)-formyl-N(1)-(5-phospho-D-ribosyl)glycinamide: step 1/2. Its function is as follows. Part of the phosphoribosylformylglycinamidine synthase complex involved in the purines biosynthetic pathway. Catalyzes the ATP-dependent conversion of formylglycinamide ribonucleotide (FGAR) and glutamine to yield formylglycinamidine ribonucleotide (FGAM) and glutamate. The FGAM synthase complex is composed of three subunits. PurQ produces an ammonia molecule by converting glutamine to glutamate. PurL transfers the ammonia molecule to FGAR to form FGAM in an ATP-dependent manner. PurS interacts with PurQ and PurL and is thought to assist in the transfer of the ammonia molecule from PurQ to PurL. The protein is Phosphoribosylformylglycinamidine synthase subunit PurQ of Bacillus anthracis (strain A0248).